We begin with the raw amino-acid sequence, 333 residues long: Plasminogen (333 aa).

In terms of domain architecture, Kringle 5 spans 4 to 83 (CMFGNGKGYR…LFDYCDVPQC (80 aa)). Cystine bridges form between Cys-4/Cys-83, Cys-25/Cys-66, Cys-54/Cys-78, Cys-90/Cys-208, Cys-100/Cys-108, Cys-130/Cys-146, Cys-222/Cys-289, Cys-252/Cys-268, and Cys-279/Cys-307. A Peptidase S1 domain is found at 104 to 331 (VVGGCVANPH…FVTWIEGIMR (228 aa)). At Ser-120 the chain carries Phosphoserine. Catalysis depends on charge relay system residues His-145 and Asp-188. The active-site Charge relay system is Ser-283.

Belongs to the peptidase S1 family. Plasminogen subfamily. Interacts with CSPG4 and AMOT. Interacts (via the Kringle domains) with HRG; the interaction tethers PLG to the cell surface and enhances its activation. Interacts (via Kringle 4 domain) with ADA; the interaction stimulates PLG activation when in complex with DPP4. Angiostatin: Interacts with ATP5F1A; the interaction inhibits most of the angiogenic effects of angiostatin.

It localises to the secreted. The enzyme catalyses Preferential cleavage: Lys-|-Xaa &gt; Arg-|-Xaa, higher selectivity than trypsin. Converts fibrin into soluble products.. With respect to regulation, converted into plasmin by plasminogen activators, both plasminogen and its activator being bound to fibrin. Activated with urokinase and high concentrations of streptokinase. In terms of biological role, plasmin dissolves the fibrin of blood clots and acts as a proteolytic factor in a variety of other processes including embryonic development, tissue remodeling, tumor invasion, and inflammation. In ovulation, weakens the walls of the Graafian follicle. It activates the urokinase-type plasminogen activator, collagenases and several complement zymogens, such as C1, C4 and C5. Cleavage of fibronectin and laminin leads to cell detachment and apoptosis. Also cleaves fibrin, thrombospondin and von Willebrand factor. Its role in tissue remodeling and tumor invasion may be modulated by CSPG4. Binds to cells. The protein is Plasminogen (PLG) of Canis lupus familiaris (Dog).